The sequence spans 160 residues: RTX-II toxin-activating lysine-acyltransferase ApxIIC (160 aa).

Catalysis depends on residues His23 and Asp92.

The protein belongs to the RTX toxin acyltransferase family. Homodimer.

The protein resides in the cytoplasm. It catalyses the reaction a fatty acyl-[ACP] + L-lysyl-[protein] = N(6)-(fatty acyl)-L-lysyl-[protein] + holo-[ACP] + H(+). In terms of biological role, protein-lysine acyltransferase that catalyzes fatty acylation of the protoxin, thereby converting it to the active toxin. This Actinobacillus pleuropneumoniae (Haemophilus pleuropneumoniae) protein is RTX-II toxin-activating lysine-acyltransferase ApxIIC (apxIIC).